The following is a 239-amino-acid chain: Small ribosomal subunit protein uS2c (239 aa).

Belongs to the universal ribosomal protein uS2 family.

The protein resides in the plastid. The protein is Small ribosomal subunit protein uS2c (rps2) of Aneura mirabilis (Parasitic liverwort).